The following is a 501-amino-acid chain: Glycerol kinase 1 (501 aa).

Thr16 is a binding site for ADP. 3 residues coordinate ATP: Thr16, Thr17, and Ser18. Thr16 contacts sn-glycerol 3-phosphate. Arg20 contributes to the ADP binding site. Sn-glycerol 3-phosphate is bound by residues Arg84, Glu85, Tyr135, and Asp242. Glycerol contacts are provided by Arg84, Glu85, Tyr135, Asp242, and Gln243. Positions 264 and 307 each coordinate ADP. Thr264, Gly307, Gln311, and Gly408 together coordinate ATP. Gly408 serves as a coordination point for ADP.

It belongs to the FGGY kinase family.

The enzyme catalyses glycerol + ATP = sn-glycerol 3-phosphate + ADP + H(+). The protein operates within polyol metabolism; glycerol degradation via glycerol kinase pathway; sn-glycerol 3-phosphate from glycerol: step 1/1. In terms of biological role, key enzyme in the regulation of glycerol uptake and metabolism. Catalyzes the phosphorylation of glycerol to yield sn-glycerol 3-phosphate. This chain is Glycerol kinase 1, found in Saccharolobus solfataricus (strain ATCC 35092 / DSM 1617 / JCM 11322 / P2) (Sulfolobus solfataricus).